A 225-amino-acid chain; its full sequence is Uridylate kinase (225 aa).

9-10 contacts ATP; the sequence is GS. Residue glycine 44 coordinates UMP. ATP is bound by residues glycine 45 and arginine 49. UMP-binding positions include aspartate 66 and 114 to 120; that span reads THPGHTT. ATP contacts are provided by threonine 140, asparagine 141, tyrosine 146, and aspartate 149.

The protein belongs to the UMP kinase family. In terms of assembly, homohexamer.

The protein localises to the cytoplasm. The enzyme catalyses UMP + ATP = UDP + ADP. The protein operates within pyrimidine metabolism; CTP biosynthesis via de novo pathway; UDP from UMP (UMPK route): step 1/1. With respect to regulation, inhibited by UTP. Catalyzes the reversible phosphorylation of UMP to UDP. This Pyrococcus abyssi (strain GE5 / Orsay) protein is Uridylate kinase.